A 536-amino-acid polypeptide reads, in one-letter code: ADP,ATP carrier protein 4 (536 aa).

The next 9 helical transmembrane spans lie at 44–64 (VLLF…LYVL), 77–97 (SILF…IVIV), 109–129 (MLEV…FVIW), 172–194 (TMLY…FSRA), 205–225 (KFLP…GLLT), 244–264 (FSQV…TSFF), 309–329 (VVAA…GIVL), 349–369 (AQII…THLI), and 378–398 (AITA…MVFF). N-linked (GlcNAc...) asparagine glycans are attached at residues asparagine 400 and asparagine 421. The next 2 helical transmembrane spans lie at 465-485 (LGIN…TVVF) and 493-513 (VVSV…RSIL).

This sequence belongs to the ADP/ATP translocase tlc family.

The protein resides in the cell membrane. Functionally, ATP transporter involved in the uptake of ATP from the host cell cytoplasm. Provides the microsporidian cell with host ATP in exchange for ADP. This is an obligate exchange system. This energy acquiring activity is an important component of microsporidian parasitism. This Encephalitozoon cuniculi (strain GB-M1) (Microsporidian parasite) protein is ADP,ATP carrier protein 4 (NTT4).